Reading from the N-terminus, the 246-residue chain is Protein phosphatase PhpP (246 aa).

In terms of domain architecture, PPM-type phosphatase spans 2 to 240 (EISLLTDVGQ…DNITVALVSM (239 aa)). Mn(2+)-binding residues include D36, G37, D192, and D231.

The protein belongs to the PP2C family. It depends on Mn(2+) as a cofactor.

Its subcellular location is the cytoplasm. The enzyme catalyses O-phospho-L-seryl-[protein] + H2O = L-seryl-[protein] + phosphate. It carries out the reaction O-phospho-L-threonyl-[protein] + H2O = L-threonyl-[protein] + phosphate. Functionally, protein phosphatase able to dephosphorylate StkP-P and other phosphorylated protein substrates. PhpP and its cognate protein kinase StkP appear to constitute a functional signaling couple in vivo, PhpP's primary role being probably to control phosphorylation levels of StkP and of its targets. PhpP thus performs an essential control of StkP activity. Also dephosphorylates DivIVA in vivo. The protein is Protein phosphatase PhpP (phpP) of Streptococcus pneumoniae serotype 2 (strain D39 / NCTC 7466).